The primary structure comprises 272 residues: 2-C-methyl-D-erythritol 4-phosphate cytidylyltransferase (272 aa).

This sequence belongs to the IspD/TarI cytidylyltransferase family. IspD subfamily.

It catalyses the reaction 2-C-methyl-D-erythritol 4-phosphate + CTP + H(+) = 4-CDP-2-C-methyl-D-erythritol + diphosphate. Its pathway is isoprenoid biosynthesis; isopentenyl diphosphate biosynthesis via DXP pathway; isopentenyl diphosphate from 1-deoxy-D-xylulose 5-phosphate: step 2/6. Its function is as follows. Catalyzes the formation of 4-diphosphocytidyl-2-C-methyl-D-erythritol from CTP and 2-C-methyl-D-erythritol 4-phosphate (MEP). The sequence is that of 2-C-methyl-D-erythritol 4-phosphate cytidylyltransferase from Xanthomonas oryzae pv. oryzae (strain MAFF 311018).